Reading from the N-terminus, the 168-residue chain is Peptide deformylase (168 aa).

Fe cation contacts are provided by C92 and H134. Residue E135 is part of the active site. H138 serves as a coordination point for Fe cation.

This sequence belongs to the polypeptide deformylase family. It depends on Fe(2+) as a cofactor.

The catalysed reaction is N-terminal N-formyl-L-methionyl-[peptide] + H2O = N-terminal L-methionyl-[peptide] + formate. In terms of biological role, removes the formyl group from the N-terminal Met of newly synthesized proteins. Requires at least a dipeptide for an efficient rate of reaction. N-terminal L-methionine is a prerequisite for activity but the enzyme has broad specificity at other positions. The protein is Peptide deformylase of Hahella chejuensis (strain KCTC 2396).